A 148-amino-acid polypeptide reads, in one-letter code: Lysozyme C (148 aa).

Positions M1–A18 are cleaved as a signal peptide. A C-type lysozyme domain is found at K19 to V148. 4 cysteine pairs are disulfide-bonded: C24–C146, C48–C134, C83–C99, and C95–C113. Active-site residues include E53 and D71.

Belongs to the glycosyl hydrolase 22 family. In terms of assembly, monomer.

Its subcellular location is the secreted. It carries out the reaction Hydrolysis of (1-&gt;4)-beta-linkages between N-acetylmuramic acid and N-acetyl-D-glucosamine residues in a peptidoglycan and between N-acetyl-D-glucosamine residues in chitodextrins.. Its function is as follows. Lysozymes have primarily a bacteriolytic function; those in tissues and body fluids are associated with the monocyte-macrophage system and enhance the activity of immunoagents. The protein is Lysozyme C (LYZ) of Hylobates lar (Lar gibbon).